We begin with the raw amino-acid sequence, 897 residues long: 4-hydroxyphenylacetate decarboxylase glycyl radical subunit (897 aa).

Positions 35-770 (ESTQKLMDIY…VTLATADGRL (736 aa)) constitute a PFL domain. 2 residues coordinate 4-hydroxyphenylacetate: Ser-344 and Cys-503. Cys-503 (cysteine radical intermediate) is an active-site residue. The Proton donor role is filled by Glu-505. Residues His-536 and Glu-637 each coordinate 4-hydroxyphenylacetate. Residues 778–897 (GSVSAAAGTD…EVIYRTEYDK (120 aa)) enclose the Glycine radical domain. Gly-873 is modified (glycine radical).

This sequence belongs to the glycyl radical enzyme (GRE) family. HPAD subfamily. In terms of assembly, heterooctamer consisting of 4 large (HpdB) subunits and 4 small (HpdC) subunits, arranged as a tetramer of heterodimers. Also forms a catalytically inactive homodimer. Post-translationally, requires the activating protein CsdA to generate the key active site glycyl radical that is involved in catalysis. In terms of processing, phosphorylated on serine. Phosphorylation may trigger the formation of the active heterooctamers and thereby regulates enzyme activity.

The catalysed reaction is 4-hydroxyphenylacetate + H(+) = 4-methylphenol + CO2. It catalyses the reaction 3,4-dihydroxyphenylacetate + H(+) = 4-methylcatechol + CO2. Glycyl radical subunit of the HPA decarboxylase that decarboxylates phenylacetates with a hydroxyl group in the p-position. Active toward 4-hydroxyphenylacetate and 3,4-dihydroxyphenylacetate, forming 4-methylphenol and 4-methylcatechol, respectively. Is likely involved in the catabolism of aromatic amino acids such as tyrosine fermentation. 4-methylphenol (p-cresol) formation provides metabolic toxicity, which allows an active suppression of other microbes and may provide growth advantages for the producers in highly competitive environments. The large subunit is the catalytic subunit that binds the substrate. The sequence is that of 4-hydroxyphenylacetate decarboxylase glycyl radical subunit from Clostridium scatologenes.